The primary structure comprises 406 residues: 2,3-bisphosphoglycerate-independent phosphoglycerate mutase (406 aa).

Residues 164 to 184 (VSSNDPKKTGVQPKTIHPDDD) form a disordered region.

Belongs to the BPG-independent phosphoglycerate mutase family. A-PGAM subfamily.

It catalyses the reaction (2R)-2-phosphoglycerate = (2R)-3-phosphoglycerate. It functions in the pathway carbohydrate degradation; glycolysis; pyruvate from D-glyceraldehyde 3-phosphate: step 3/5. Catalyzes the interconversion of 2-phosphoglycerate and 3-phosphoglycerate. The protein is 2,3-bisphosphoglycerate-independent phosphoglycerate mutase of Methanocorpusculum labreanum (strain ATCC 43576 / DSM 4855 / Z).